The following is a 148-amino-acid chain: UPF0178 protein DP1304 (148 aa).

Belongs to the UPF0178 family.

This Desulfotalea psychrophila (strain LSv54 / DSM 12343) protein is UPF0178 protein DP1304.